The following is a 153-amino-acid chain: MTDQPAKKVHSAPTLKVQLRSENAIAPTKGSAAAAGYDIYASQDCVIPGRGQGLVATDVSFTVPVGTYGRIAPRSGLAVKHGIQTGAGVVDRDYTGEVKIVLFNHSDRDYAVKRGDRVAQLVLERIVDDAEVVVVESLDESSRGEGGFGSTGN.

Ser75, Gly88, Asp91, Tyr94, Lys99, Arg143, Phe148, and Gly149 together coordinate dUMP.

This sequence belongs to the dUTPase family. As to quaternary structure, homotrimer. Mg(2+) is required as a cofactor.

The catalysed reaction is dUTP + H2O = dUMP + diphosphate + H(+). Its pathway is pyrimidine metabolism; dUMP biosynthesis; dUMP from dCTP (dUTP route): step 2/2. In terms of biological role, involved in nucleotide metabolism via production of dUMP, the immediate precursor of thymidine nucleotides, and decreases the intracellular concentration of dUTP so that uracil cannot be incorporated into DNA. The polypeptide is Deoxyuridine 5'-triphosphate nucleotidohydrolase (DUT1) (Eremothecium gossypii (strain ATCC 10895 / CBS 109.51 / FGSC 9923 / NRRL Y-1056) (Yeast)).